Reading from the N-terminus, the 65-residue chain is Hainantoxin-X (65 aa).

A signal peptide spans 1-20 (MNMKILVLVAVLCLVVSTHA). Residues 21 to 37 (ERHSKTDMEDSPMIQER) constitute a propeptide that is removed on maturation. 3 cysteine pairs are disulfide-bonded: C39–C56, C46–C59, and C55–C64.

The protein belongs to the neurotoxin 36 family. 02 subfamily. In terms of tissue distribution, expressed by the venom gland.

It localises to the secreted. Its function is as follows. Reversibly blocks N-type calcium channels (Cav2.2/CACNA1B) in rat dorsal root ganglion cells. Elicits no toxic symptoms in either vertebrates or invertebrates during a period of 48 hours post-injection, when it was assayed in vivo by direct injection into mice and cockroaches. The polypeptide is Hainantoxin-X (Cyriopagopus hainanus (Chinese bird spider)).